The following is a 178-amino-acid chain: Putative RING-H2 finger protein ATL19 (178 aa).

A helical membrane pass occupies residues 11 to 31; sequence LISVLGLAVFIGLCILLVVLI. The segment at 130–172 adopts an RING-type; atypical zinc-finger fold; it reads CAICLSGYVVNEECRVFPVCRHIYHALCIDAWLKNHLTCPTCR.

Belongs to the RING-type zinc finger family. ATL subfamily.

It is found in the membrane. It catalyses the reaction S-ubiquitinyl-[E2 ubiquitin-conjugating enzyme]-L-cysteine + [acceptor protein]-L-lysine = [E2 ubiquitin-conjugating enzyme]-L-cysteine + N(6)-ubiquitinyl-[acceptor protein]-L-lysine.. Its pathway is protein modification; protein ubiquitination. The polypeptide is Putative RING-H2 finger protein ATL19 (ATL19) (Arabidopsis thaliana (Mouse-ear cress)).